Reading from the N-terminus, the 233-residue chain is Lipoprotein-releasing system ATP-binding protein LolD (233 aa).

One can recognise an ABC transporter domain in the interval 6 to 233 (LQCDNLCKRY…TAELSLMGAE (228 aa)). Residue 42–49 (GSSGSGKS) participates in ATP binding.

This sequence belongs to the ABC transporter superfamily. Lipoprotein translocase (TC 3.A.1.125) family. In terms of assembly, the complex is composed of two ATP-binding proteins (LolD) and two transmembrane proteins (LolC and LolE).

The protein resides in the cell inner membrane. Its function is as follows. Part of the ABC transporter complex LolCDE involved in the translocation of mature outer membrane-directed lipoproteins, from the inner membrane to the periplasmic chaperone, LolA. Responsible for the formation of the LolA-lipoprotein complex in an ATP-dependent manner. This is Lipoprotein-releasing system ATP-binding protein LolD from Shigella dysenteriae serotype 1 (strain Sd197).